Reading from the N-terminus, the 434-residue chain is Probable carboxypeptidase BDCG_03757 (434 aa).

An N-terminal signal peptide occupies residues 1–20 (MKLSHLAAALSAQLVAPVAA). Asn136 and Asn150 each carry an N-linked (GlcNAc...) asparagine glycan. Asp160 lines the Zn(2+) pocket. Glu192 serves as the catalytic Proton acceptor. Glu193 provides a ligand contact to Zn(2+). Residue Asn343 is glycosylated (N-linked (GlcNAc...) asparagine).

The protein belongs to the peptidase M20A family. Requires Zn(2+) as cofactor.

It is found in the secreted. In Ajellomyces dermatitidis (strain ER-3 / ATCC MYA-2586) (Blastomyces dermatitidis), this protein is Probable carboxypeptidase BDCG_03757.